A 446-amino-acid polypeptide reads, in one-letter code: tRNA modification GTPase MnmE (446 aa).

(6S)-5-formyl-5,6,7,8-tetrahydrofolate contacts are provided by Arg-23, Glu-81, and Lys-120. A TrmE-type G domain is found at 216–370 (GFKVAIIGKP…LIKELELILD (155 aa)). Position 226 (Asn-226) interacts with K(+). GTP contacts are provided by residues 226–231 (NVGKSS), 245–251 (SDIAGTT), and 270–273 (DTAG). Ser-230 lines the Mg(2+) pocket. 3 residues coordinate K(+): Ser-245, Ile-247, and Thr-250. Thr-251 contributes to the Mg(2+) binding site. Lys-446 contacts (6S)-5-formyl-5,6,7,8-tetrahydrofolate.

The protein belongs to the TRAFAC class TrmE-Era-EngA-EngB-Septin-like GTPase superfamily. TrmE GTPase family. As to quaternary structure, homodimer. Heterotetramer of two MnmE and two MnmG subunits. K(+) is required as a cofactor.

It is found in the cytoplasm. Exhibits a very high intrinsic GTPase hydrolysis rate. Involved in the addition of a carboxymethylaminomethyl (cmnm) group at the wobble position (U34) of certain tRNAs, forming tRNA-cmnm(5)s(2)U34. This chain is tRNA modification GTPase MnmE, found in Aliarcobacter butzleri (strain RM4018) (Arcobacter butzleri).